Reading from the N-terminus, the 165-residue chain is Lipoprotein signal peptidase (165 aa).

A run of 4 helical transmembrane segments spans residues 7–27 (YFSS…LVLL), 46–66 (AVTS…FSFL), 72–92 (WQRY…IYLL), and 100–120 (LFCW…IDRV). Catalysis depends on residues aspartate 127 and aspartate 145. Residues 136–156 (WHWPAFNIADSAICIGAVLFI) form a helical membrane-spanning segment.

This sequence belongs to the peptidase A8 family.

It is found in the cell inner membrane. It carries out the reaction Release of signal peptides from bacterial membrane prolipoproteins. Hydrolyzes -Xaa-Yaa-Zaa-|-(S,diacylglyceryl)Cys-, in which Xaa is hydrophobic (preferably Leu), and Yaa (Ala or Ser) and Zaa (Gly or Ala) have small, neutral side chains.. It participates in protein modification; lipoprotein biosynthesis (signal peptide cleavage). In terms of biological role, this protein specifically catalyzes the removal of signal peptides from prolipoproteins. The chain is Lipoprotein signal peptidase from Janthinobacterium sp. (strain Marseille) (Minibacterium massiliensis).